The sequence spans 246 residues: MRLIIATCAVDYVGRLEAHLPRADRLIMVKADGAVSIHADDRAYKPLNWMTPPCTTTEYRRAEALAEATDGKDPFLTLPELEDEDVEALWVVENPKGEQLRIQLFAVHSDQNFDLGEDPGLQKDGVEAHLQELLAEQIEILGEGYSLVRREYPTPIGPVDILTKDATGATVAVEIKRRGNIDGVEQLTRYVELLNRDELLAPVTGVFAAQEIKPQARTLAEDRGIRCVTLDYAAMRGTDDSEFRLF.

It belongs to the NucS endonuclease family.

It localises to the cytoplasm. Cleaves both 3' and 5' ssDNA extremities of branched DNA structures. The protein is Endonuclease NucS of Corynebacterium urealyticum (strain ATCC 43042 / DSM 7109).